Here is a 378-residue protein sequence, read N- to C-terminus: MFGRLPPCASRVRAGALVGALGARTCGSSGAQRQGSAPDDSGAGLARGALREWTLQVSPFGRLRARLPCHLAVRPLDPLAHPDGDRVQVAVCGVEHVARGLDSLQVKYDADRQEMAILSDDIDPQASVEVNAPVKFDLSIESSGSGSVKVQNIECDSCKIDTEQGTSILQSVKSQKLHVQTKGGDVICCGTVYGNIDIHASDKSTVSIEKLQGSCVNISTEDGLLQAKYLYTESSFLSSAAGNIALGNVHGNIILQSKMGNITVDSSCGCLKASSHQGAIDVYVSQLGEVALTTEEGSIAVKAPSSLRAYFKLSGKEVVVDEEAHVQEMAKDCKGDGVTVTGLMNQASKHERWINAIAPKGTVSFQHQSWFQSLKLPD.

This chain is Protein FAM185A (Fam185a), found in Mus musculus (Mouse).